A 267-amino-acid chain; its full sequence is Exopolysaccharide production negative regulator (267 aa).

A signal peptide spans 1 to 23; it reads MVTSEFKLFKFMLMGMSIAVALA.

Functionally, negatively modulates exopolysaccharide (EPS) biosynthesis. This chain is Exopolysaccharide production negative regulator (exoR), found in Rhizobium leguminosarum bv. viciae.